A 271-amino-acid chain; its full sequence is Urease accessory protein UreD (271 aa).

This sequence belongs to the UreD family. In terms of assembly, ureD, UreF and UreG form a complex that acts as a GTP-hydrolysis-dependent molecular chaperone, activating the urease apoprotein by helping to assemble the nickel containing metallocenter of UreC. The UreE protein probably delivers the nickel.

The protein resides in the cytoplasm. Required for maturation of urease via the functional incorporation of the urease nickel metallocenter. This is Urease accessory protein UreD from Halalkalibacterium halodurans (strain ATCC BAA-125 / DSM 18197 / FERM 7344 / JCM 9153 / C-125) (Bacillus halodurans).